The sequence spans 431 residues: Peptidase B (431 aa).

Residues Lys-196 and Asp-201 each contribute to the Mn(2+) site. Lys-208 is an active-site residue. Asp-219, Asp-278, and Glu-280 together coordinate Mn(2+). Residue Arg-282 is part of the active site.

It belongs to the peptidase M17 family. Homohexamer. Requires Mn(2+) as cofactor.

The protein localises to the cytoplasm. The enzyme catalyses Release of an N-terminal amino acid, Xaa, from a peptide or arylamide. Xaa is preferably Glu or Asp but may be other amino acids, including Leu, Met, His, Cys and Gln.. Functionally, probably plays an important role in intracellular peptide degradation. The polypeptide is Peptidase B (Serratia proteamaculans (strain 568)).